The chain runs to 307 residues: 4-hydroxy-3-methylbut-2-enyl diphosphate reductase (307 aa).

Cys13 serves as a coordination point for [4Fe-4S] cluster. His42 and His75 together coordinate (2E)-4-hydroxy-3-methylbut-2-enyl diphosphate. The dimethylallyl diphosphate site is built by His42 and His75. Isopentenyl diphosphate is bound by residues His42 and His75. Cys97 is a [4Fe-4S] cluster binding site. His125 is a binding site for (2E)-4-hydroxy-3-methylbut-2-enyl diphosphate. His125 is a dimethylallyl diphosphate binding site. His125 is an isopentenyl diphosphate binding site. Glu127 functions as the Proton donor in the catalytic mechanism. A (2E)-4-hydroxy-3-methylbut-2-enyl diphosphate-binding site is contributed by Thr165. [4Fe-4S] cluster is bound at residue Cys195. Residues Ser223, Ser224, Asn225, and Ser267 each contribute to the (2E)-4-hydroxy-3-methylbut-2-enyl diphosphate site. Residues Ser223, Ser224, Asn225, and Ser267 each coordinate dimethylallyl diphosphate. Isopentenyl diphosphate is bound by residues Ser223, Ser224, Asn225, and Ser267.

The protein belongs to the IspH family. The cofactor is [4Fe-4S] cluster.

The enzyme catalyses isopentenyl diphosphate + 2 oxidized [2Fe-2S]-[ferredoxin] + H2O = (2E)-4-hydroxy-3-methylbut-2-enyl diphosphate + 2 reduced [2Fe-2S]-[ferredoxin] + 2 H(+). It carries out the reaction dimethylallyl diphosphate + 2 oxidized [2Fe-2S]-[ferredoxin] + H2O = (2E)-4-hydroxy-3-methylbut-2-enyl diphosphate + 2 reduced [2Fe-2S]-[ferredoxin] + 2 H(+). The protein operates within isoprenoid biosynthesis; dimethylallyl diphosphate biosynthesis; dimethylallyl diphosphate from (2E)-4-hydroxy-3-methylbutenyl diphosphate: step 1/1. It participates in isoprenoid biosynthesis; isopentenyl diphosphate biosynthesis via DXP pathway; isopentenyl diphosphate from 1-deoxy-D-xylulose 5-phosphate: step 6/6. In terms of biological role, catalyzes the conversion of 1-hydroxy-2-methyl-2-(E)-butenyl 4-diphosphate (HMBPP) into a mixture of isopentenyl diphosphate (IPP) and dimethylallyl diphosphate (DMAPP). Acts in the terminal step of the DOXP/MEP pathway for isoprenoid precursor biosynthesis. This Chlamydia trachomatis serovar L2b (strain UCH-1/proctitis) protein is 4-hydroxy-3-methylbut-2-enyl diphosphate reductase.